Here is a 957-residue protein sequence, read N- to C-terminus: Glycine dehydrogenase (decarboxylating) (957 aa).

An N6-(pyridoxal phosphate)lysine modification is found at K708.

The protein belongs to the GcvP family. The glycine cleavage system is composed of four proteins: P, T, L and H. Pyridoxal 5'-phosphate is required as a cofactor.

The enzyme catalyses N(6)-[(R)-lipoyl]-L-lysyl-[glycine-cleavage complex H protein] + glycine + H(+) = N(6)-[(R)-S(8)-aminomethyldihydrolipoyl]-L-lysyl-[glycine-cleavage complex H protein] + CO2. Its function is as follows. The glycine cleavage system catalyzes the degradation of glycine. The P protein binds the alpha-amino group of glycine through its pyridoxal phosphate cofactor; CO(2) is released and the remaining methylamine moiety is then transferred to the lipoamide cofactor of the H protein. This Salmonella typhi protein is Glycine dehydrogenase (decarboxylating).